The sequence spans 30 residues: LIM and SH3 domain protein 1 (30 aa).

Met-1 is subject to N-acetylmethionine. One can recognise an LIM zinc-binding domain in the interval 5 to 30; sequence CARCGKIVYPTEKVNCLDKFWHKACF.

As to quaternary structure, interacts with F-actin. Interacts with ANKRD54. Interacts with KBTBD10. In terms of processing, phosphorylated.

It localises to the cytoplasm. The protein resides in the cell cortex. Its subcellular location is the cytoskeleton. Plays an important role in the regulation of dynamic actin-based, cytoskeletal activities. Agonist-dependent changes in LASP1 phosphorylation may also serve to regulate actin-associated ion transport activities, not only in the parietal cell but also in certain other F-actin-rich secretory epithelial cell types. This chain is LIM and SH3 domain protein 1 (LASP1), found in Sus scrofa (Pig).